A 270-amino-acid polypeptide reads, in one-letter code: Putative pyruvate, phosphate dikinase regulatory protein (270 aa).

149-156 lines the ADP pocket; the sequence is GVSRTSKT.

The protein belongs to the pyruvate, phosphate/water dikinase regulatory protein family. PDRP subfamily.

It catalyses the reaction N(tele)-phospho-L-histidyl/L-threonyl-[pyruvate, phosphate dikinase] + ADP = N(tele)-phospho-L-histidyl/O-phospho-L-threonyl-[pyruvate, phosphate dikinase] + AMP + H(+). The catalysed reaction is N(tele)-phospho-L-histidyl/O-phospho-L-threonyl-[pyruvate, phosphate dikinase] + phosphate + H(+) = N(tele)-phospho-L-histidyl/L-threonyl-[pyruvate, phosphate dikinase] + diphosphate. Its function is as follows. Bifunctional serine/threonine kinase and phosphorylase involved in the regulation of the pyruvate, phosphate dikinase (PPDK) by catalyzing its phosphorylation/dephosphorylation. This chain is Putative pyruvate, phosphate dikinase regulatory protein, found in Thermoanaerobacter pseudethanolicus (strain ATCC 33223 / 39E) (Clostridium thermohydrosulfuricum).